A 344-amino-acid polypeptide reads, in one-letter code: Ketol-acid reductoisomerase (NADP(+)) (344 aa).

A KARI N-terminal Rossmann domain is found at Met1–Thr181. Residues Tyr25–Gln28, Arg48, Ser52, and Asp82–Gln85 each bind NADP(+). His107 is an active-site residue. Gly133 is a binding site for NADP(+). A KARI C-terminal knotted domain is found at Thr182 to Ile327. 4 residues coordinate Mg(2+): Asp190, Glu194, Glu226, and Glu230. Residue Ser251 coordinates substrate.

The protein belongs to the ketol-acid reductoisomerase family. Mg(2+) is required as a cofactor.

The catalysed reaction is (2R)-2,3-dihydroxy-3-methylbutanoate + NADP(+) = (2S)-2-acetolactate + NADPH + H(+). It carries out the reaction (2R,3R)-2,3-dihydroxy-3-methylpentanoate + NADP(+) = (S)-2-ethyl-2-hydroxy-3-oxobutanoate + NADPH + H(+). Its pathway is amino-acid biosynthesis; L-isoleucine biosynthesis; L-isoleucine from 2-oxobutanoate: step 2/4. The protein operates within amino-acid biosynthesis; L-valine biosynthesis; L-valine from pyruvate: step 2/4. Functionally, involved in the biosynthesis of branched-chain amino acids (BCAA). Catalyzes an alkyl-migration followed by a ketol-acid reduction of (S)-2-acetolactate (S2AL) to yield (R)-2,3-dihydroxy-isovalerate. In the isomerase reaction, S2AL is rearranged via a Mg-dependent methyl migration to produce 3-hydroxy-3-methyl-2-ketobutyrate (HMKB). In the reductase reaction, this 2-ketoacid undergoes a metal-dependent reduction by NADPH to yield (R)-2,3-dihydroxy-isovalerate. The polypeptide is Ketol-acid reductoisomerase (NADP(+)) (Lysinibacillus sphaericus (strain C3-41)).